Reading from the N-terminus, the 222-residue chain is Adenylate kinase (222 aa).

An ATP-binding site is contributed by 10 to 15 (GAGKGT). Positions 30 to 59 (STGDMLRAAVKAGTPLGIEAKKVMDAGGLV) are NMP. AMP-binding positions include threonine 31, arginine 36, 57–59 (GLV), 85–88 (GFPR), and glutamine 92. Positions 122–159 (GRRVHVASGRTYHVKYNPPKNEGQDDETGDPLIQRDDD) are LID. Residues arginine 123 and 132–133 (TY) contribute to the ATP site. Positions 135 to 162 (VKYNPPKNEGQDDETGDPLIQRDDDKEE) are disordered. AMP-binding residues include arginine 156 and arginine 167. Glycine 207 provides a ligand contact to ATP.

This sequence belongs to the adenylate kinase family. As to quaternary structure, monomer.

The protein resides in the cytoplasm. The enzyme catalyses AMP + ATP = 2 ADP. It functions in the pathway purine metabolism; AMP biosynthesis via salvage pathway; AMP from ADP: step 1/1. In terms of biological role, catalyzes the reversible transfer of the terminal phosphate group between ATP and AMP. Plays an important role in cellular energy homeostasis and in adenine nucleotide metabolism. In Ralstonia nicotianae (strain ATCC BAA-1114 / GMI1000) (Ralstonia solanacearum), this protein is Adenylate kinase.